The sequence spans 1966 residues: Dedicator of cytokinesis protein 4 (1966 aa).

The SH3 domain maps to 6 to 67 (EHEKYGVVIA…PSSYVHLKNA (62 aa)). Residue Tyr167 is modified to Phosphotyrosine. Thr193 is subject to Phosphothreonine. In terms of domain architecture, C2 DOCK-type spans 401 to 574 (RNDLYITIER…ESFCITSFLC (174 aa)). The DOCKER domain occupies 1190 to 1596 (KTELNKEEMY…LGIQEFSACM (407 aa)). Ser1599, Ser1607, Ser1614, Ser1618, Ser1620, and Ser1631 each carry phosphoserine. Disordered regions lie at residues 1648–1729 (SQAS…IYPT) and 1742–1966 (IGDG…VSQL). The segment covering 1672–1703 (PSPSTSSLSSTHSASPNVTSSAPSSARASPLL) has biased composition (low complexity). Position 1769 is a phosphoserine (Ser1769). The SH3-binding motif lies at 1788–1794 (PPVPPRP). Positions 1795-1809 (TQTASPARHTTSVSP) are enriched in polar residues. Residues 1838 to 1863 (SNSPVLSGSYSSGISSLSRCSTSETS) are compositionally biased toward low complexity. The span at 1864–1873 (GFENQVNEQS) shows a compositional bias: polar residues. A compositionally biased stretch (basic and acidic residues) spans 1941–1954 (SHLENGARRTDPGP).

This sequence belongs to the DOCK family. Interacts with nucleotide-free Rap1; functions as a guanine nucleotide exchange factor (GEF) for Rap1. Interacts (via DOCKER domain) with RAC1; functions as a guanine nucleotide exchange factor (GEF) for RAC1. Interacts with the SH3 domain of CRK. Interacts with FASLG. Interacts with ELMO2 and EPHA2; mediates activation of RAC1 by EPHA2. Interacts with USH1C (via PDZ 1 domain). Widely expressed at low level. Highly expressed in skeletal muscle, prostate and ovary. As to expression, may be specifically expressed in the brain and eye.

It is found in the cell membrane. Its subcellular location is the cell projection. The protein resides in the cytoplasm. It localises to the cytosol. In terms of biological role, functions as a guanine nucleotide exchange factor (GEF) that promotes the exchange of GDP to GTP, converting inactive GDP-bound small GTPases into their active GTP-bound form. Involved in regulation of adherens junction between cells. Plays a role in cell migration. Its function is as follows. Has a higher guanine nucleotide exchange factor activity compared to other isoforms. The sequence is that of Dedicator of cytokinesis protein 4 (DOCK4) from Homo sapiens (Human).